The chain runs to 410 residues: Na(+)-translocating NADH-quinone reductase subunit B (410 aa).

The next 3 membrane-spanning stretches (helical) occupy residues 56 to 76, 119 to 139, and 159 to 179; these read MMILVWLALFPAMFYGMYNVG, LFGAIYFLPIYATVFIVGGFW, and SILFALIVPPTLPLWQAALGI. At Thr-232 the chain carries FMN phosphoryl threonine. 5 helical membrane passes run 266 to 286, 293 to 313, 318 to 338, 347 to 367, and 377 to 397; these read GSIGEVSTLALLIGGAFIVFA, IIAGVMIGMIAMSSLFNFIGS, MFAMPWYWHLVVGGFAIGMLF, SFTNVGKWWYGALIGVMCVLI, and GMMLAILFANLFAPIFDYFVA.

The protein belongs to the NqrB/RnfD family. In terms of assembly, composed of six subunits; NqrA, NqrB, NqrC, NqrD, NqrE and NqrF. The cofactor is FMN.

The protein resides in the cell inner membrane. It catalyses the reaction a ubiquinone + n Na(+)(in) + NADH + H(+) = a ubiquinol + n Na(+)(out) + NAD(+). NQR complex catalyzes the reduction of ubiquinone-1 to ubiquinol by two successive reactions, coupled with the transport of Na(+) ions from the cytoplasm to the periplasm. NqrA to NqrE are probably involved in the second step, the conversion of ubisemiquinone to ubiquinol. The protein is Na(+)-translocating NADH-quinone reductase subunit B of Neisseria meningitidis serogroup A / serotype 4A (strain DSM 15465 / Z2491).